Reading from the N-terminus, the 318-residue chain is MKPLNIIFAGTPDFAARHLQALINSHHNVIAVYTQPDRPAGRGKKLTASPVKELAVSHDIPVYQPGSLRKEPAQQELAALNADIMVVVAYGLILPKVVLDTPRLGCINVHGSILPRWRGAAPIQRALWAGDKETGVTIMQMDVGLDTGDMLLKTYLPIEDDDTSATLYEKLALQGPDALLQALEGLANGTLTAEKQDEVLANYAEKLSKEEARLDWRKSATQLWQEVRAFNPWPVSYFEHQGNTIKVWQTQVSTTSSNAAPGTIISASKKGIEVATGDGVLTLLSMQLPGKKPLSVADILNARGDWFTPNTRLNNEAQ.

Position 112–115 (112–115 (SILP)) interacts with (6S)-5,6,7,8-tetrahydrofolate.

Belongs to the Fmt family.

It carries out the reaction L-methionyl-tRNA(fMet) + (6R)-10-formyltetrahydrofolate = N-formyl-L-methionyl-tRNA(fMet) + (6S)-5,6,7,8-tetrahydrofolate + H(+). In terms of biological role, attaches a formyl group to the free amino group of methionyl-tRNA(fMet). The formyl group appears to play a dual role in the initiator identity of N-formylmethionyl-tRNA by promoting its recognition by IF2 and preventing the misappropriation of this tRNA by the elongation apparatus. The sequence is that of Methionyl-tRNA formyltransferase from Shewanella sp. (strain ANA-3).